A 454-amino-acid chain; its full sequence is Cholesterol 7-desaturase nvd (454 aa).

2 helical membrane-spanning segments follow: residues 13–33 and 47–67; these read VLCP…LGAG and TTLS…LWGW. A Rieske domain is found at 117–221; that stretch reads WYRALDSHLL…SCELNGMVFV (105 aa). [2Fe-2S] cluster contacts are provided by Cys158, His160, Cys178, and His181.

It belongs to the cholesterol 7-desaturase family. Requires [2Fe-2S] cluster as cofactor.

The protein resides in the membrane. The enzyme catalyses cholesterol + NADPH + O2 + H(+) = 7-dehydrocholesterol + NADP(+) + 2 H2O. The catalysed reaction is cholesterol + NADH + O2 + H(+) = 7-dehydrocholesterol + NAD(+) + 2 H2O. It functions in the pathway steroid hormone biosynthesis; dafachronic acid biosynthesis. Catalyzes the production of 7-dehydrocholesterol (7-DHC or cholesta-5,7-dien-3beta-ol) by inserting a double bond (desaturating) at the C7-C8 single bond of cholesterol. This reaction is the first step in the synthesis of the steroid hormone Delta(7)-dafachronic acid. The chain is Cholesterol 7-desaturase nvd (nvd) from Xenopus laevis (African clawed frog).